We begin with the raw amino-acid sequence, 169 residues long: General odorant-binding protein 57a (169 aa).

The N-terminal stretch at 1 to 20 (MFNTRLAIFLLLIVVSLSQA) is a signal peptide. Disulfide bonds link Cys39–Cys77, Cys73–Cys120, and Cys111–Cys129.

The protein belongs to the PBP/GOBP family.

Functionally, present in the aqueous fluid surrounding olfactory sensory dendrites and are thought to aid in the capture and transport of hydrophobic odorants into and through this fluid. This chain is General odorant-binding protein 57a, found in Drosophila melanogaster (Fruit fly).